Reading from the N-terminus, the 147-residue chain is D-aminoacyl-tRNA deacylase (147 aa).

Residues 137–138 carry the Gly-cisPro motif, important for rejection of L-amino acids motif; sequence GP.

This sequence belongs to the DTD family. In terms of assembly, homodimer.

It localises to the cytoplasm. The enzyme catalyses glycyl-tRNA(Ala) + H2O = tRNA(Ala) + glycine + H(+). It catalyses the reaction a D-aminoacyl-tRNA + H2O = a tRNA + a D-alpha-amino acid + H(+). Functionally, an aminoacyl-tRNA editing enzyme that deacylates mischarged D-aminoacyl-tRNAs. Also deacylates mischarged glycyl-tRNA(Ala), protecting cells against glycine mischarging by AlaRS. Acts via tRNA-based rather than protein-based catalysis; rejects L-amino acids rather than detecting D-amino acids in the active site. By recycling D-aminoacyl-tRNA to D-amino acids and free tRNA molecules, this enzyme counteracts the toxicity associated with the formation of D-aminoacyl-tRNA entities in vivo and helps enforce protein L-homochirality. In Acinetobacter baumannii (strain ATCC 17978 / DSM 105126 / CIP 53.77 / LMG 1025 / NCDC KC755 / 5377), this protein is D-aminoacyl-tRNA deacylase.